A 269-amino-acid polypeptide reads, in one-letter code: Thyroxine 5-deiodinase (269 aa).

Residues 1–14 (MLPAPHTCCRLLQQ) are Cytoplasmic-facing. A helical; Signal-anchor for type II membrane protein membrane pass occupies residues 15–35 (LLACCLLLPRFLLTVLLLWLL). The Extracellular portion of the chain corresponds to 36 to 269 (DFPCVRRRVI…TGNGALVIQV (234 aa)). Residue Sec133 is part of the active site. Residue Sec133 is a non-standard amino acid, selenocysteine.

The protein belongs to the iodothyronine deiodinase family. As to quaternary structure, monomer. Homodimer. May undergo minor heretodimerization with DIO1 and DIO2.

The protein resides in the cell membrane. It is found in the endosome membrane. It catalyses the reaction 3,3',5'-triiodo-L-thyronine + iodide + A + H(+) = L-thyroxine + AH2. The catalysed reaction is 3,3'-diiodo-L-thyronine + iodide + A + H(+) = 3,3',5-triiodo-L-thyronine + AH2. The enzyme catalyses 3-iodo-L-thyronine + iodide + A + H(+) = 3,5-diiodo-L-thyronine + AH2. It carries out the reaction L-thyronine + iodide + A + H(+) = 3-iodo-L-thyronine + AH2. It catalyses the reaction 3',5'-diiodo-L-thyronine + iodide + A + H(+) = 3,3',5'-triiodo-L-thyronine + AH2. The catalysed reaction is 3'-iodo-L-thyronine + iodide + A + H(+) = 3,3'-diiodo-L-thyronine + AH2. The enzyme catalyses 3,3',5'-triiodothyronamine + iodide + A + H(+) = 3,3',5,5'-tetraiodothyronamine + AH2. It carries out the reaction 3',5'-diiodothyronamine + iodide + A + H(+) = 3,3',5'-triiodothyronamine + AH2. It catalyses the reaction 3,3'-diiodothyronamine + iodide + A + H(+) = 3,3',5-triiodothyronamine + AH2. The catalysed reaction is 3-iodothyronamine + iodide + A + H(+) = 3,5-diiodothyronamine + AH2. The enzyme catalyses 3'-iodothyronamine + iodide + A + H(+) = 3,3'-diiodothyronamine + AH2. It carries out the reaction thyronamine + iodide + A + H(+) = 3-iodothyronamine + AH2. Functionally, plays a crucial role in the metabolism of thyroid hormones (TH) and has specific roles in TH activation and inactivation by deiodination. Catalyzes the deiodination of L-thyroxine (T4) to 3,3',5'-triiodothyronine (rT3), 3,5-diiodothyronine (3,5-T2) to 3-monoiodothyronine (3-T1), rT3 to 3',5'-diiodothyronine (3',5'-T2) and 3,3'-diiodothyronine (3,3'-T2) to 3'-monoiodothyronine (3'-T1) via inner-ring deiodination (IRD). Catalyzes the deiodination of 3,5,3'-triiodothyronine (T3) to 3,3'-diiodothyronine (3,3'-T2) via IRD. Catalyzes the deiodination of 3-T1 to L-thyronine (T0) via outer-ring deiodination (ORD). Catalyzes the tyrosyl ring deiodinations of 3,3',5,5'-tetraiodothyronamine, 3,3',5'-triiodothyronamine, 3,5,3'-triiodothyronamine, 3,5-diiodothyronamine, 3,3'-diiodothyronamine and 3-iodothyronamine. The polypeptide is Thyroxine 5-deiodinase (dio3) (Aquarana catesbeiana (American bullfrog)).